We begin with the raw amino-acid sequence, 607 residues long: Phosphatidylinositol 4-kinase LSB6 (607 aa).

Residues asparagine 73 to asparagine 88 are compositionally biased toward polar residues. A disordered region spans residues asparagine 73–leucine 93. The PI3K/PI4K catalytic domain maps to glycine 161–isoleucine 522. Positions isoleucine 167 to glycine 173 are G-loop. A disordered region spans residues lysine 318–asparagine 356. Residues serine 319–threonine 330 are compositionally biased toward basic and acidic residues. A compositionally biased stretch (polar residues) spans serine 341–threonine 351. The tract at residues arginine 384 to asparagine 392 is catalytic loop. Residues alanine 411 to tyrosine 431 are activation loop.

The protein belongs to the PI3/PI4-kinase family. In terms of assembly, interacts with LAS17. Requires Mg(2+) as cofactor. Mn(2+) serves as cofactor.

Its subcellular location is the cell membrane. The protein localises to the vacuole membrane. It carries out the reaction a 1,2-diacyl-sn-glycero-3-phospho-(1D-myo-inositol) + ATP = a 1,2-diacyl-sn-glycero-3-phospho-(1D-myo-inositol 4-phosphate) + ADP + H(+). Functionally, may play a role in endocytic and/or exocytic pathways. In Saccharomyces cerevisiae (strain ATCC 204508 / S288c) (Baker's yeast), this protein is Phosphatidylinositol 4-kinase LSB6 (LSB6).